A 503-amino-acid polypeptide reads, in one-letter code: Probable cytosol aminopeptidase (503 aa).

Residues lysine 270 and aspartate 275 each contribute to the Mn(2+) site. Residue lysine 282 is part of the active site. The Mn(2+) site is built by aspartate 293, aspartate 352, and glutamate 354. Arginine 356 is a catalytic residue.

The protein belongs to the peptidase M17 family. It depends on Mn(2+) as a cofactor.

It is found in the cytoplasm. It carries out the reaction Release of an N-terminal amino acid, Xaa-|-Yaa-, in which Xaa is preferably Leu, but may be other amino acids including Pro although not Arg or Lys, and Yaa may be Pro. Amino acid amides and methyl esters are also readily hydrolyzed, but rates on arylamides are exceedingly low.. The catalysed reaction is Release of an N-terminal amino acid, preferentially leucine, but not glutamic or aspartic acids.. Its function is as follows. Presumably involved in the processing and regular turnover of intracellular proteins. Catalyzes the removal of unsubstituted N-terminal amino acids from various peptides. This is Probable cytosol aminopeptidase from Pectobacterium atrosepticum (strain SCRI 1043 / ATCC BAA-672) (Erwinia carotovora subsp. atroseptica).